The chain runs to 418 residues: UDP-glucuronic acid decarboxylase 1 (418 aa).

The Cytoplasmic segment spans residues Met-1 to Lys-17. Residues Ile-18–Met-38 form a helical; Signal-anchor for type II membrane protein membrane-spanning segment. Topologically, residues Arg-39–Asn-418 are lumenal. NAD(+) contacts are provided by Gly-96, Phe-97, Val-98, Asp-117, Asn-118, Phe-120, Thr-121, Gly-122, Asp-142, and Val-143. Residues Leu-147 and Tyr-148 each contribute to the UDP-alpha-D-glucuronate site. NAD(+)-binding residues include Leu-157 and Ser-159. Lys-175 lines the UDP-alpha-D-glucuronate pocket. Residue Thr-176 participates in NAD(+) binding. UDP-alpha-D-glucuronate is bound by residues Asn-183, Gly-186, Lys-189, and Arg-190. Residues Ala-198, Tyr-229, and Lys-233 each coordinate NAD(+). Tyr-229 functions as the Proton acceptor in the catalytic mechanism. Residues Tyr-243, Gln-246, and Glu-247 each contribute to the UDP-alpha-D-glucuronate site. 3 residues coordinate NAD(+): Thr-259, His-265, and Arg-270. N-linked (GlcNAc...) asparagine glycans are attached at residues Asn-314 and Asn-383. Positions Ala-397 to Asn-418 are disordered. Residues Lys-406–Asn-418 are compositionally biased toward basic residues.

The protein belongs to the NAD(P)-dependent epimerase/dehydratase family. UDP-glucuronic acid decarboxylase subfamily. Homodimer and homotetramer. It depends on NAD(+) as a cofactor.

The protein resides in the golgi apparatus. The protein localises to the golgi stack membrane. The enzyme catalyses UDP-alpha-D-glucuronate + H(+) = UDP-alpha-D-xylose + CO2. It functions in the pathway nucleotide-sugar biosynthesis; UDP-alpha-D-xylose biosynthesis; UDP-alpha-D-xylose from UDP-alpha-D-glucuronate: step 1/1. Functionally, catalyzes the NAD-dependent decarboxylation of UDP-glucuronic acid to UDP-xylose. Necessary for the biosynthesis of the core tetrasaccharide in glycosaminoglycan biosynthesis. Essential during embryogenesis for craniofacial development. This Danio rerio (Zebrafish) protein is UDP-glucuronic acid decarboxylase 1.